The sequence spans 279 residues: Acyl-coenzyme A thioesterase MBLAC2 (279 aa).

N-acetylserine is present on S2. H83, H85, D87, H88, H170, D189, and H231 together coordinate Zn(2+). A lipid anchor (S-palmitoyl cysteine) is attached at C254.

This sequence belongs to the metallo-beta-lactamase superfamily. Glyoxalase II family. Zn(2+) is required as a cofactor. Post-translationally, palmitoylated on Cys-254 by ZDHHC20.

Its subcellular location is the endoplasmic reticulum membrane. It is found in the cell membrane. It carries out the reaction hexadecanoyl-CoA + H2O = hexadecanoate + CoA + H(+). The catalysed reaction is dodecanoyl-CoA + H2O = dodecanoate + CoA + H(+). The enzyme catalyses tetradecanoyl-CoA + H2O = tetradecanoate + CoA + H(+). It catalyses the reaction octadecanoyl-CoA + H2O = octadecanoate + CoA + H(+). It carries out the reaction a beta-lactam + H2O = a substituted beta-amino acid. With respect to regulation, beta-lactamase activity is inhibited by sulbactam. Its function is as follows. Acyl-CoA thioesterases are a group of enzymes that catalyze the hydrolysis of acyl-CoAs to the free fatty acid and coenzyme A (CoASH), providing the potential to regulate intracellular levels of acyl-CoAs, free fatty acids and CoASH. Has an acyl-CoA thioesterase activity towards the long chain fatty acyl-CoA thioester palmitoyl-CoA (hexadecanoyl-CoA; C16:0-CoA). Displays a substrate preference for fatty acyl-CoAs with chain-lengths C12-C18. Possesses beta-lactamase activity, catalyzing the hydrolysis of penicillin G and nitrocefin. Exhibits no activity towards other beta-lactam antibiotic classes including cephalosporins (cefotaxime) and carbapenems (imipenem). In Homo sapiens (Human), this protein is Acyl-coenzyme A thioesterase MBLAC2 (MBLAC2).